We begin with the raw amino-acid sequence, 866 residues long: Phospholipase D gamma 3 (866 aa).

In terms of domain architecture, C2 spans 31–170; sequence PFDTSSGSLR…CSGNRIEGLF (140 aa). Asp232 contacts Ca(2+). A PLD phosphodiesterase 1 domain is found at 371 to 406; the sequence is TIYTHHQKTMIVDAEAAQNRRKIVAFVGGLDLCNGR. Residues His376, Lys378, and Asp383 contribute to the active site. Residue His376 coordinates a 1,2-diacyl-sn-glycero-3-phosphate. His412 and His444 together coordinate Ca(2+). Residue Gln572 coordinates a 1,2-diacyl-sn-glycero-3-phosphate. At Ser692 the chain carries Phosphoserine. A PLD phosphodiesterase 2 domain is found at 712–739; it reads FMIYVHSKGMVVDDEFVLIGSANINQRS. Catalysis depends on residues His717, Lys719, and Asp724. His717 contacts a 1,2-diacyl-sn-glycero-3-phosphate. Glu780 contacts Ca(2+).

This sequence belongs to the phospholipase D family. C2-PLD subfamily. Ca(2+) is required as a cofactor. As to expression, highly expressed in inflorescences and old leaves, moderately in stems, roots, siliques and young leaves and low in flowers.

It is found in the cytoplasm. The protein localises to the membrane. It carries out the reaction a 1,2-diacyl-sn-glycero-3-phosphocholine + H2O = a 1,2-diacyl-sn-glycero-3-phosphate + choline + H(+). With respect to regulation, inhibited by neomycin. Hydrolyzes glycerol-phospholipids at the terminal phosphodiesteric bond to generate phosphatidic acids (PA). Plays an important role in various cellular processes, including phytohormone action, vesicular trafficking, secretion, cytoskeletal arrangement, meiosis, tumor promotion, pathogenesis, membrane deterioration and senescence. Can use phosphatidylserine but prefers ethanolamine-containing lipids as substrates. This is Phospholipase D gamma 3 from Arabidopsis thaliana (Mouse-ear cress).